Reading from the N-terminus, the 250-residue chain is Kv channel-interacting protein 4 (250 aa).

The interval 2–44 (NVRRVESISAQLEEASSTGGFLYAQNSTKRSIKERLMKLLPCS) is KIS. Phosphoserine is present on residues S17 and S56. The region spanning 61–117 (LEMATVRHRPEALELLEAQSKFTKKELQILYRGFKNECPSGVVNEETFKEIYSQFFP) is the EF-hand 1; degenerate domain. 3 consecutive EF-hand domains span residues 120–155 (DSTT…LLRG), 156–191 (TVQE…IYDM), and 204–239 (APRQ…DENI). 13 residues coordinate Ca(2+): D133, D135, N137, D144, D169, N171, D173, Y175, E180, D217, N219, D221, and E228. The interval 237–250 (ENIMRSMQLFENVI) is interaction with KCND2.

This sequence belongs to the recoverin family. In terms of assembly, component of heteromultimeric potassium channels. Identified in potassium channel complexes containing KCND1, KCND2, KCND3, KCNIP1, KCNIP2, KCNIP3, KCNIP4, DPP6 and DPP10. Interacts with KCND2. Interacts with KCND3. Interacts with the C-terminus of PSEN2 and probably PSEN1.

The protein localises to the cell membrane. It localises to the cytoplasm. It is found in the peroxisome. In terms of biological role, regulatory subunit of Kv4/D (Shal)-type voltage-gated rapidly inactivating A-type potassium channels. Modulates KCND2 channel density, inactivation kinetics and rate of recovery from inactivation in a calcium-dependent and isoform-specific manner. Modulates KCND3/Kv4.3 currents. Isoform 4 does not increase KCND2 expression at the cell membrane. Isoform 4 retains KCND3 in the endoplasmic reticulum and negatively regulates its expression at the cell membrane. This chain is Kv channel-interacting protein 4 (KCNIP4), found in Macaca fascicularis (Crab-eating macaque).